We begin with the raw amino-acid sequence, 444 residues long: U4/U6 snRNA-associated-splicing factor PRP24 (444 aa).

Basic and acidic residues predominate over residues methionine 1–aspartate 16. Residues methionine 1–lysine 29 are disordered. Serine 19 carries the post-translational modification Phosphoserine. 3 RRM domains span residues threonine 41–glutamate 116, cysteine 117–proline 195, and arginine 210–lysine 289.

As to quaternary structure, monomer. Interacts with U6 snRNA SNR6 and the LSM2-8 complex (small nuclear RNA); to chaperone formation of the U4/U6-U5 tri-snRNP (small nuclear ribonucleoprotein) assembly, the protein is displaced from the U4/U6 snRNP once pairing is complete.

Its subcellular location is the nucleus. Functionally, functions as a recycling factor of the spliceosome, a machinery that forms on each precursor-messenger RNA (pre-mRNA) and catalyzes the removal of introns. Chaperones the re-annealing of U4 and U6 snRNAs (small nuclear RNAs) released from previous rounds of splicing, an initial step in reforming the U4/U6-U5 tri-snRNP (small nuclear ribonucleoprotein) that can reassemble into another spliceosome complex; this step involves binding U6 and facilitating the unwinding of the U6 internal stem loop, followed by base-pairing of U6 to U4. The polypeptide is U4/U6 snRNA-associated-splicing factor PRP24 (PRP24) (Saccharomyces cerevisiae (strain ATCC 204508 / S288c) (Baker's yeast)).